The following is a 520-amino-acid chain: tRNA (guanine-N(7)-)-methyltransferase non-catalytic subunit TRM82 (520 aa).

Positions 51-102 (PLDSEISPDRASSAGTCAEPPEKRRKLTPPVDESGEAQTEQSAKAKARKSQT) are disordered. 3 WD repeats span residues 105–145 (QAWS…KLTQ), 244–291 (GHVS…HIIH), and 296–338 (GHTS…QTIP).

This sequence belongs to the WD repeat TRM82 family. Forms a heterodimer with the catalytic subunit TRM8.

It is found in the nucleus. The protein operates within tRNA modification; N(7)-methylguanine-tRNA biosynthesis. In terms of biological role, required for the formation of N(7)-methylguanine at position 46 (m7G46) in tRNA. In the complex, it is required to stabilize and induce conformational changes of the catalytic subunit. The sequence is that of tRNA (guanine-N(7)-)-methyltransferase non-catalytic subunit TRM82 from Coccidioides immitis (strain RS) (Valley fever fungus).